Reading from the N-terminus, the 393-residue chain is Pyruvate dehydrogenase E1 component subunit alpha-2, mitochondrial (393 aa).

A mitochondrion-targeting transit peptide spans 1–28 (MALSRLSSRSNTFLKPAITALPSSIRRH). Pyruvate-binding residues include His-94, Tyr-120, Arg-121, Gly-169, Val-171, Asp-200, Gly-201, Ala-202, Asn-229, and Tyr-231. Thiamine diphosphate-binding residues include Tyr-120, Arg-121, Gly-169, Val-171, Asp-200, Gly-201, Ala-202, and Asn-229. Asp-200 is a binding site for Mg(2+). The Mg(2+) site is built by Asn-229 and Tyr-231. His-295 contributes to the thiamine diphosphate binding site.

In terms of assembly, tetramer of 2 alpha and 2 beta subunits. Thiamine diphosphate is required as a cofactor. It depends on Mg(2+) as a cofactor.

It is found in the mitochondrion matrix. It carries out the reaction N(6)-[(R)-lipoyl]-L-lysyl-[protein] + pyruvate + H(+) = N(6)-[(R)-S(8)-acetyldihydrolipoyl]-L-lysyl-[protein] + CO2. Its activity is regulated as follows. E1 activity is regulated by phosphorylation (inactivation) and dephosphorylation (activation) of the alpha subunit. Its function is as follows. The pyruvate dehydrogenase complex catalyzes the overall conversion of pyruvate to acetyl-CoA and CO(2). It contains multiple copies of three enzymatic components: pyruvate dehydrogenase (E1), dihydrolipoamide acetyltransferase (E2) and lipoamide dehydrogenase (E3). This is Pyruvate dehydrogenase E1 component subunit alpha-2, mitochondrial (IAR4) from Arabidopsis thaliana (Mouse-ear cress).